Here is a 108-residue protein sequence, read N- to C-terminus: UPF0060 membrane protein Mvan_3406 (108 aa).

4 helical membrane-spanning segments follow: residues Leu7–Val27, Gly32–Phe52, Val61–Asp81, and Arg87–Pro107.

It belongs to the UPF0060 family.

The protein resides in the cell membrane. The sequence is that of UPF0060 membrane protein Mvan_3406 from Mycolicibacterium vanbaalenii (strain DSM 7251 / JCM 13017 / BCRC 16820 / KCTC 9966 / NRRL B-24157 / PYR-1) (Mycobacterium vanbaalenii).